The chain runs to 339 residues: Glycerol-3-phosphate dehydrogenase [NAD(P)+] (339 aa).

NADPH contacts are provided by S11, W12, and K109. K109, G140, and S142 together coordinate sn-glycerol 3-phosphate. A144 is a binding site for NADPH. Residues K195, D249, S259, R260, and N261 each coordinate sn-glycerol 3-phosphate. The active-site Proton acceptor is K195. R260 serves as a coordination point for NADPH. Residues V284 and E286 each contribute to the NADPH site.

The protein belongs to the NAD-dependent glycerol-3-phosphate dehydrogenase family.

The protein localises to the cytoplasm. The enzyme catalyses sn-glycerol 3-phosphate + NAD(+) = dihydroxyacetone phosphate + NADH + H(+). The catalysed reaction is sn-glycerol 3-phosphate + NADP(+) = dihydroxyacetone phosphate + NADPH + H(+). It participates in membrane lipid metabolism; glycerophospholipid metabolism. Its function is as follows. Catalyzes the reduction of the glycolytic intermediate dihydroxyacetone phosphate (DHAP) to sn-glycerol 3-phosphate (G3P), the key precursor for phospholipid synthesis. This is Glycerol-3-phosphate dehydrogenase [NAD(P)+] from Lactobacillus acidophilus (strain ATCC 700396 / NCK56 / N2 / NCFM).